Here is a 699-residue protein sequence, read N- to C-terminus: tRNA(Met) cytidine acetyltransferase TmcA (699 aa).

ATP is bound by residues glutamine 179, 201–210 (GRGKSTLAGM), and arginine 323. One can recognise an N-acetyltransferase domain in the interval 359-543 (IEIPLYEQRD…SGCYTAMALL (185 aa)). Acetyl-CoA is bound by residues 471–473 (VAV), glutamate 511, and arginine 518.

This sequence belongs to the RNA cytidine acetyltransferase family. TmcA subfamily.

It is found in the cytoplasm. The enzyme catalyses cytidine(34) in elongator tRNA(Met) + acetyl-CoA + ATP + H2O = N(4)-acetylcytidine(34) in elongator tRNA(Met) + ADP + phosphate + CoA + H(+). Its function is as follows. Catalyzes the formation of N(4)-acetylcytidine (ac(4)C) at the wobble position of tRNA(Met), by using acetyl-CoA as an acetyl donor and ATP (or GTP). This is tRNA(Met) cytidine acetyltransferase TmcA from Yersinia pestis (strain D106004).